We begin with the raw amino-acid sequence, 359 residues long: Nicotinate-nucleotide--dimethylbenzimidazole phosphoribosyltransferase (359 aa).

Glu318 functions as the Proton acceptor in the catalytic mechanism.

It belongs to the CobT family. Homodimer.

It carries out the reaction 5,6-dimethylbenzimidazole + nicotinate beta-D-ribonucleotide = alpha-ribazole 5'-phosphate + nicotinate + H(+). It functions in the pathway nucleoside biosynthesis; alpha-ribazole biosynthesis; alpha-ribazole from 5,6-dimethylbenzimidazole: step 1/2. In terms of biological role, catalyzes the synthesis of alpha-ribazole-5'-phosphate from nicotinate mononucleotide (NAMN) and 5,6-dimethylbenzimidazole (DMB). The sequence is that of Nicotinate-nucleotide--dimethylbenzimidazole phosphoribosyltransferase from Shigella sonnei (strain Ss046).